The chain runs to 105 residues: Flagellar transcriptional regulator FlhD (105 aa).

It belongs to the FlhD family. Homodimer; disulfide-linked. Forms a heterohexamer composed of two FlhC and four FlhD subunits. Each FlhC binds a FlhD dimer, forming a heterotrimer, and a hexamer assembles by dimerization of two heterotrimers.

The protein localises to the cytoplasm. In terms of biological role, functions in complex with FlhC as a master transcriptional regulator that regulates transcription of several flagellar and non-flagellar operons by binding to their promoter region. Activates expression of class 2 flagellar genes, including fliA, which is a flagellum-specific sigma factor that turns on the class 3 genes. Also regulates genes whose products function in a variety of physiological pathways. In Nitrosomonas europaea (strain ATCC 19718 / CIP 103999 / KCTC 2705 / NBRC 14298), this protein is Flagellar transcriptional regulator FlhD.